Here is a 606-residue protein sequence, read N- to C-terminus: Kelch-like protein 41 (606 aa).

Serine 3 is modified (phosphoserine). Positions 33–100 (IDCTLKAGDK…LYSASIDLND (68 aa)) constitute a BTB domain. The region spanning 135 to 237 (CLAILRLGLL…TEKYFKDHVE (103 aa)) is the BACK domain. 5 Kelch repeats span residues 346 to 398 (QIYV…EVDD), 399 to 447 (KIYV…SHKG), 448 to 495 (MIYC…VHKG), 497 to 542 (IVIA…SLAG), and 544 to 599 (LYAI…TRLN).

In terms of assembly, interacts with NRAP. Interacts with LASP1. Part of a complex that contains CUL3, RBX1 and KLHL41. In terms of processing, ubiquitinated by E3 ubiquitin ligase complex formed by CUL3 and RBX1 and probably targeted for proteasome-independent degradation. Quinone-induced oxidative stress increases its ubiquitination. Sarcomeric muscle.

The protein resides in the cytoplasm. Its subcellular location is the cytoskeleton. The protein localises to the cell projection. It localises to the pseudopodium. It is found in the ruffle. The protein resides in the myofibril. Its subcellular location is the sarcomere. The protein localises to the m line. It localises to the sarcoplasmic reticulum membrane. It is found in the endoplasmic reticulum membrane. Functionally, involved in skeletal muscle development and differentiation. Regulates proliferation and differentiation of myoblasts and plays a role in myofibril assembly by promoting lateral fusion of adjacent thin fibrils into mature, wide myofibrils. Required for pseudopod elongation in transformed cells. The protein is Kelch-like protein 41 (KLHL41) of Homo sapiens (Human).